The primary structure comprises 397 residues: LIM/homeobox protein Lhx9 (397 aa).

LIM zinc-binding domains follow at residues 69 to 130 (ALCA…RFSV) and 131 to 193 (QRCA…LLQG). Disordered stretches follow at residues 248–272 (ENEA…RMRT), 330–365 (ENGG…LTDL), and 378–397 (SNMD…TNLF). The segment at residues 267 to 326 (TKRMRTSFKHHQLRTMKSYFAINHNPDAKDLKQLAQKTGLTKRVLQVWFQNARAKFRRNL) is a DNA-binding region (homeobox). Residues 353 to 365 (LTPPGTATTLTDL) are compositionally biased toward low complexity. Positions 387 to 397 (SPSQTTLTNLF) are enriched in polar residues.

Interacts with LDB1 and LDB2. As to expression, expressed in the dorsal thalamus and inner nuclei of the cerebellum.

It is found in the nucleus. Functionally, involved in gonadal development. This chain is LIM/homeobox protein Lhx9 (Lhx9), found in Mus musculus (Mouse).